Reading from the N-terminus, the 246-residue chain is MTSEAAPASTAVTYKRVMLKISGEALMGDQGYGLHPPTVQRIAREVQAVHRLGVEICMVIGGGNIFRGLQGSAQGMERTTADYMGMLATVMNALAMQAALESLGIFTRVISAIPMDQVCEPYIRRRAVRHLEKKRVCIFAAGTGNPYFTTDTAATLRANEMACQAIFKGTKVDGVYDKDPRKFADAKRYETVSYDECLQKHLGVMDASAIALARDNDLPIIVFSLDEPGGFCGILRGEGTYTRVQG.

Lysine 20 to glycine 23 is a binding site for ATP. Residues glycine 28–glycine 33 are involved in allosteric activation by GTP. Position 62 (glycine 62) interacts with UMP. The ATP site is built by glycine 63 and arginine 67. UMP contacts are provided by residues aspartate 82 and threonine 143–threonine 150. Threonine 170, tyrosine 176, and aspartate 179 together coordinate ATP.

It belongs to the UMP kinase family. In terms of assembly, homohexamer.

The protein localises to the cytoplasm. The catalysed reaction is UMP + ATP = UDP + ADP. It participates in pyrimidine metabolism; CTP biosynthesis via de novo pathway; UDP from UMP (UMPK route): step 1/1. With respect to regulation, allosterically activated by GTP. Inhibited by UTP. Its function is as follows. Catalyzes the reversible phosphorylation of UMP to UDP. This Cereibacter sphaeroides (strain ATCC 17029 / ATH 2.4.9) (Rhodobacter sphaeroides) protein is Uridylate kinase.